Here is a 253-residue protein sequence, read N- to C-terminus: uncharacterized protein (253 aa).

A disordered region spans residues 211 to 235 (DEPEPAQPTLTVPSAQPVSNRRGKP). A compositionally biased stretch (polar residues) spans 218 to 229 (PTLTVPSAQPVS).

This is an uncharacterized protein from Mycobacterium tuberculosis (strain CDC 1551 / Oshkosh).